A 303-amino-acid polypeptide reads, in one-letter code: uncharacterized protein (303 aa).

The signal sequence occupies residues 1–24; that stretch reads MNRIALVFLYSLFLFNLAIGRVES. Asparagine 116 is a glycosylation site (N-linked (GlcNAc...) asparagine). The segment at 124–179 is disordered; the sequence is FTRQQQKKSHDDDDDDDDSDSDESKEEEEKKKRDRKHRRDKRQAITQGSQNNTDPN. The segment covering 135 to 149 has biased composition (acidic residues); sequence DDDDDDDSDSDESKE. Positions 155 to 164 are enriched in basic residues; that stretch reads KRDRKHRRDK. A compositionally biased stretch (polar residues) spans 167–178; sequence AITQGSQNNTDP.

This is an uncharacterized protein from Caenorhabditis elegans.